A 119-amino-acid polypeptide reads, in one-letter code: MGHVEKVARRHKIKTRSKARGQGTVEKPRLCVFRSLSQIYVQLVDDVNGAILLSVSSMSKENKGLKGTKCDISRTIGKQIGEKAVQKGITKVVFDRNGFRYHGRVQALADGAREAGLVF.

The tract at residues 1–22 is disordered; that stretch reads MGHVEKVARRHKIKTRSKARGQ. The segment covering 8 to 19 has biased composition (basic residues); that stretch reads ARRHKIKTRSKA.

This sequence belongs to the universal ribosomal protein uL18 family. Part of the 50S ribosomal subunit; part of the 5S rRNA/L5/L18/L25 subcomplex. Contacts the 5S and 23S rRNAs.

In terms of biological role, this is one of the proteins that bind and probably mediate the attachment of the 5S RNA into the large ribosomal subunit, where it forms part of the central protuberance. This chain is Large ribosomal subunit protein uL18, found in Chlorobium phaeobacteroides (strain BS1).